The following is a 109-amino-acid chain: Small ribosomal subunit protein bS6 (109 aa).

The protein belongs to the bacterial ribosomal protein bS6 family.

Functionally, binds together with bS18 to 16S ribosomal RNA. The chain is Small ribosomal subunit protein bS6 from Anaplasma phagocytophilum (strain HZ).